Reading from the N-terminus, the 141-residue chain is Flagellar assembly factor FliW 1 (141 aa).

This sequence belongs to the FliW family. Interacts with translational regulator CsrA and flagellin(s).

It localises to the cytoplasm. Functionally, acts as an anti-CsrA protein, binds CsrA and prevents it from repressing translation of its target genes, one of which is flagellin. Binds to flagellin and participates in the assembly of the flagellum. The chain is Flagellar assembly factor FliW 1 from Desulfotalea psychrophila (strain LSv54 / DSM 12343).